The following is a 938-amino-acid chain: Isoleucine--tRNA ligase (938 aa).

Residues proline 65–histidine 75 carry the 'HIGH' region motif. Glutamate 568 provides a ligand contact to L-isoleucyl-5'-AMP. The 'KMSKS' region signature appears at lysine 609–serine 613. Lysine 612 serves as a coordination point for ATP. Zn(2+)-binding residues include cysteine 905, cysteine 908, cysteine 921, and cysteine 924.

The protein belongs to the class-I aminoacyl-tRNA synthetase family. IleS type 1 subfamily. Monomer. It depends on Zn(2+) as a cofactor.

It is found in the cytoplasm. It catalyses the reaction tRNA(Ile) + L-isoleucine + ATP = L-isoleucyl-tRNA(Ile) + AMP + diphosphate. Catalyzes the attachment of isoleucine to tRNA(Ile). As IleRS can inadvertently accommodate and process structurally similar amino acids such as valine, to avoid such errors it has two additional distinct tRNA(Ile)-dependent editing activities. One activity is designated as 'pretransfer' editing and involves the hydrolysis of activated Val-AMP. The other activity is designated 'posttransfer' editing and involves deacylation of mischarged Val-tRNA(Ile). The sequence is that of Isoleucine--tRNA ligase from Mannheimia succiniciproducens (strain KCTC 0769BP / MBEL55E).